We begin with the raw amino-acid sequence, 409 residues long: Transcriptional regulator GME11370 (409 aa).

Positions 17–44 form a DNA-binding region, zn(2)-C6 fungal-type; that stretch reads CHACAASKLKCSKEKPSCARCLKRNKPC. A disordered region spans residues 49 to 83; that stretch reads TRRAGRHHGSRSKKVPTISPASAPEPQPFSTTPPD. The segment covering 51–62 has biased composition (basic residues); that stretch reads RAGRHHGSRSKK.

It is found in the nucleus. Functionally, transcriptional regulator; part of the gene cluster that mediates the biosynthesis of dibenzodioxocinones such as pestalotiollide B, a novel class of inhibitors against cholesterol ester transfer protein (CEPT). The sequence is that of Transcriptional regulator GME11370 from Pestalotiopsis microspora.